The chain runs to 118 residues: Large ribosomal subunit protein bL20 (118 aa).

It belongs to the bacterial ribosomal protein bL20 family.

Binds directly to 23S ribosomal RNA and is necessary for the in vitro assembly process of the 50S ribosomal subunit. It is not involved in the protein synthesizing functions of that subunit. The polypeptide is Large ribosomal subunit protein bL20 (Marinomonas sp. (strain MWYL1)).